The sequence spans 291 residues: Probable L-ascorbate peroxidase 4, peroxisomal (291 aa).

His-40 functions as the Proton acceptor in the catalytic mechanism. Position 160 (His-160) interacts with heme b. Residues Thr-161, Thr-177, and Asp-184 each coordinate K(+). Residues 263–283 (VLAQSAVGVAVAAAVVIVSYL) traverse the membrane as a helical segment.

It belongs to the peroxidase family. Ascorbate peroxidase subfamily. Heme b is required as a cofactor. As to expression, expressed in leaves, stems and flowers.

It is found in the peroxisome membrane. It carries out the reaction L-ascorbate + H2O2 = L-dehydroascorbate + 2 H2O. Functionally, plays a key role in hydrogen peroxide removal. This is Probable L-ascorbate peroxidase 4, peroxisomal from Oryza sativa subsp. japonica (Rice).